The sequence spans 331 residues: Ribosomal RNA small subunit methyltransferase C (331 aa).

It belongs to the methyltransferase superfamily. RsmC family. In terms of assembly, monomer.

Its subcellular location is the cytoplasm. It catalyses the reaction guanosine(1207) in 16S rRNA + S-adenosyl-L-methionine = N(2)-methylguanosine(1207) in 16S rRNA + S-adenosyl-L-homocysteine + H(+). Its function is as follows. Specifically methylates the guanine in position 1207 of 16S rRNA in the 30S particle. The polypeptide is Ribosomal RNA small subunit methyltransferase C (Ectopseudomonas mendocina (strain ymp) (Pseudomonas mendocina)).